The chain runs to 396 residues: MAQLLDSPGFIERSAAVPHKAAAAPATRDAAAPAAVPGAAVSFELVGKVFDGPRGPAAALREVTLDIARGGVFGVIGRSGAGKSTLLRLVNGLERPTSGAVRVNGVDVGTLDERGLVALRRRIGMVFQHFNLLSAKTVAQNIGLPLKIAGVPKAERARKVDALLDLVGLAAKRDAYPASLSGGQKQRVGIARALVHDPALLLCDEATSALDPETTQSILALLADINRRLGLTIMLITHEMEVIRAVCDTVAVVEQGEVVETGPVWRVFGDPRHGATRALLRTLVHDLPADLAARVRPLDGAAPLPCGAQLLLDVRYTGASGGEPDLGALTAALARNVGDAVHFVHGGLDRIQGRVQGRLVIAASLAARGAAGPDRIAAALAAARRHANRVEVLGYV.

The 240-residue stretch at 41–280 folds into the ABC transporter domain; that stretch reads VSFELVGKVF…PRHGATRALL (240 aa). 77-84 lines the ATP pocket; sequence GRSGAGKS.

Belongs to the ABC transporter superfamily. Methionine importer (TC 3.A.1.24) family. In terms of assembly, the complex is composed of two ATP-binding proteins (MetN), two transmembrane proteins (MetI) and a solute-binding protein (MetQ).

Its subcellular location is the cell inner membrane. It catalyses the reaction L-methionine(out) + ATP + H2O = L-methionine(in) + ADP + phosphate + H(+). The catalysed reaction is D-methionine(out) + ATP + H2O = D-methionine(in) + ADP + phosphate + H(+). In terms of biological role, part of the ABC transporter complex MetNIQ involved in methionine import. Responsible for energy coupling to the transport system. This is Methionine import ATP-binding protein MetN 2 from Burkholderia pseudomallei (strain K96243).